The chain runs to 344 residues: Small ribosomal subunit protein bS1m (344 aa).

The residue at position 327 (S327) is a Phosphoserine.

It belongs to the bacterial ribosomal protein bS1 family. As to quaternary structure, component of the mitochondrial small ribosomal subunit (mt-SSU). Mature yeast 74S mitochondrial ribosomes consist of a small (37S) and a large (54S) subunit. The 37S small subunit contains a 15S ribosomal RNA (15S mt-rRNA) and 34 different proteins. The 54S large subunit contains a 21S rRNA (21S mt-rRNA) and 46 different proteins.

Its subcellular location is the mitochondrion. Functionally, component of the mitochondrial ribosome (mitoribosome), a dedicated translation machinery responsible for the synthesis of mitochondrial genome-encoded proteins, including at least some of the essential transmembrane subunits of the mitochondrial respiratory chain. The mitoribosomes are attached to the mitochondrial inner membrane and translation products are cotranslationally integrated into the membrane. bS1m functionally interacts with the 5'-UTR of mitochondrial mRNAs. The sequence is that of Small ribosomal subunit protein bS1m (MRP51) from Saccharomyces cerevisiae (strain ATCC 204508 / S288c) (Baker's yeast).